The chain runs to 56 residues: UPF0339 protein NMA1193/NMA1859 (56 aa).

It belongs to the UPF0339 family.

The chain is UPF0339 protein NMA1193/NMA1859 from Neisseria meningitidis serogroup A / serotype 4A (strain DSM 15465 / Z2491).